The primary structure comprises 90 residues: uncharacterized protein (90 aa).

The protein belongs to the barstar family.

This is an uncharacterized protein from Escherichia coli O157:H7.